The following is a 237-amino-acid chain: Ribonuclease PH (237 aa).

Residues Arg86 and 124–126 contribute to the phosphate site; that span reads GTR.

The protein belongs to the RNase PH family. Homohexameric ring arranged as a trimer of dimers.

It carries out the reaction tRNA(n+1) + phosphate = tRNA(n) + a ribonucleoside 5'-diphosphate. In terms of biological role, phosphorolytic 3'-5' exoribonuclease that plays an important role in tRNA 3'-end maturation. Removes nucleotide residues following the 3'-CCA terminus of tRNAs; can also add nucleotides to the ends of RNA molecules by using nucleoside diphosphates as substrates, but this may not be physiologically important. Probably plays a role in initiation of 16S rRNA degradation (leading to ribosome degradation) during starvation. This Methylorubrum populi (strain ATCC BAA-705 / NCIMB 13946 / BJ001) (Methylobacterium populi) protein is Ribonuclease PH.